A 408-amino-acid polypeptide reads, in one-letter code: 2-acyl-4-prenylphloroglucinol 6-prenyltransferase, chloroplastic (408 aa).

A chloroplast-targeting transit peptide spans 1-46 (MELSSACNLSLKPNYYYYPTSLFPSNNSYNNLKASSYYQTQRPIKC). 9 helical membrane passes run 119–139 (PIPF…ELLK), 146–166 (WQLM…HIYI), 193–213 (SVKS…LLMI), 217–237 (CGLF…MYSV), 257–277 (IGIG…GLPF), 281–301 (PPFT…SILK), 326–346 (IVLV…GVAI), 355–375 (YIMI…TWLL), and 388–408 (YYHF…FIST).

It belongs to the UbiA prenyltransferase family. Homo- and heteromer. Interacts with PT1L, forming a functional metabolon. Requires Mg(2+) as cofactor. Expressed in trichomes.

The protein resides in the plastid. It is found in the chloroplast membrane. The enzyme catalyses a 2-acyl-4-prenylphloroglucinol + dimethylallyl diphosphate = a 2-acyl-4,6-diprenylphloroglucinol + diphosphate. The catalysed reaction is a 2-acyl-4,6-diprenylphloroglucinol + dimethylallyl diphosphate = a 2-acyl-4,6,6-triprenylphloroglucinol + diphosphate. It functions in the pathway secondary metabolite biosynthesis. Functionally, involved in the biosynthesis of prenylated phenolics natural products which contribute to the bitter taste of beer and display broad biological activities. Catalyzes the two last prenylation steps in the beta-bitter acid pathway. Uses dimethylallyl diphosphate (DMAPP) as the prenyl donor. In Humulus lupulus (European hop), this protein is 2-acyl-4-prenylphloroglucinol 6-prenyltransferase, chloroplastic.